A 150-amino-acid polypeptide reads, in one-letter code: 3-dehydroquinate dehydratase (150 aa).

Catalysis depends on Tyr26, which acts as the Proton acceptor. Substrate-binding residues include Asn77, His83, and Asp90. The active-site Proton donor is His103. Substrate contacts are provided by residues Leu104–Ser105 and Arg114.

This sequence belongs to the type-II 3-dehydroquinase family. In terms of assembly, homododecamer.

The enzyme catalyses 3-dehydroquinate = 3-dehydroshikimate + H2O. Its pathway is metabolic intermediate biosynthesis; chorismate biosynthesis; chorismate from D-erythrose 4-phosphate and phosphoenolpyruvate: step 3/7. Its function is as follows. Catalyzes a trans-dehydration via an enolate intermediate. The polypeptide is 3-dehydroquinate dehydratase (Sodalis glossinidius (strain morsitans)).